Reading from the N-terminus, the 122-residue chain is EPIDERMAL PATTERNING FACTOR-like protein 1 (122 aa).

Positions 1-26 (MFAIYKSTLLLLPLILILLITPQVSS) are cleaved as a signal peptide. Disulfide bonds link Cys-55–Cys-113, Cys-59–Cys-65, and Cys-62–Cys-115.

Belongs to the plant cysteine rich small secretory peptide family. Epidermal patterning factor subfamily.

The protein localises to the secreted. Its function is as follows. Controls stomatal patterning. This is EPIDERMAL PATTERNING FACTOR-like protein 1 from Arabidopsis thaliana (Mouse-ear cress).